Consider the following 224-residue polypeptide: Myogenin (224 aa).

Phosphoserine; by CaMK2G is present on residues serine 77 and serine 79. Residues 81 to 132 form the bHLH domain; it reads DRRRAATLREKRRLKKVNEAFEALKRSTLLNPNQRLPKVEILRSAIQYIERL. Phosphothreonine; by CaMK2G is present on threonine 87.

As to quaternary structure, homodimer and heterodimer with E12; heterodimerization enhances MYOG DNA-binding and transcriptional activities. Interacts with SMARCA4/BRG1/BAF190A. Interacts (via C-terminal region) with SSRP1 and SUPT16H; the interaction is indicative of an interaction with the FACT complex. Interacts with CSRP3. In terms of processing, phosphorylated by CAMK2G on threonine and serine amino acids in a muscle activity-dependent manner. Phosphorylation of Thr-87 impairs both DNA-binding and trans-activation functions in contracting muscles.

Its subcellular location is the nucleus. Acts as a transcriptional activator that promotes transcription of muscle-specific target genes and plays a role in muscle differentiation, cell cycle exit and muscle atrophy. Essential for the development of functional embryonic skeletal fiber muscle differentiation. However is dispensable for postnatal skeletal muscle growth; phosphorylation by CAMK2G inhibits its transcriptional activity in respons to muscle activity. Required for the recruitment of the FACT complex to muscle-specific promoter regions, thus promoting gene expression initiation. During terminal myoblast differentiation, plays a role as a strong activator of transcription at loci with an open chromatin structure previously initiated by MYOD1. Together with MYF5 and MYOD1, co-occupies muscle-specific gene promoter core regions during myogenesis. Also cooperates with myocyte-specific enhancer factor MEF2D and BRG1-dependent recruitment of SWI/SNF chromatin-remodeling enzymes to alter chromatin structure at myogenic late gene promoters. Facilitates cell cycle exit during terminal muscle differentiation through the up-regulation of miR-20a expression, which in turn represses genes involved in cell cycle progression. Binds to the E-box containing (E1) promoter region of the miR-20a gene. Also plays a role in preventing reversal of muscle cell differentiation. Contributes to the atrophy-related gene expression in adult denervated muscles. Induces fibroblasts to differentiate into myoblasts. This is Myogenin (MYOG) from Bos taurus (Bovine).